The following is a 620-amino-acid chain: Chaperone protein HscA homolog (620 aa).

It belongs to the heat shock protein 70 family.

Functionally, chaperone involved in the maturation of iron-sulfur cluster-containing proteins. Has a low intrinsic ATPase activity which is markedly stimulated by HscB. The protein is Chaperone protein HscA homolog of Colwellia psychrerythraea (strain 34H / ATCC BAA-681) (Vibrio psychroerythus).